The primary structure comprises 712 residues: MCSPASPKILYRNPRFLRLAFLQLHHQQQSDVFCDVLLQAEGEAVPAHCCILSACSPFFTERLERERPAQGGKVVLELGGLKISTLRKLVDFLYTSEMEVSQEEAQDVLSAARQLRVSELESLQLEGGKLVKAPQGRRLNRECLQPTSAAPISARVVTPSHHPHTPLPTNQTPCPLGAIRLKSLGKEEGPQENNRQNADNLSGTLLLKRKARACPTPQEKNSSPSSHSQEPRENKNDTALDPTVLSPPSLYPSVDKHLLPRKIRLSRSKPSPGICTSKPSSILSGSSSVPATPGRRLWRQRSVNKETPEDKPKPGRASPLQSTPNPSGLGKTGGSRKRSPEVRAPNSDSAEEGQVGRVKLRKIVNGTCWEVVQETPLKNTQDSPQIPDPGGDFQEPSGTQPFSSNEQEMSPTRTELCQDSPMCTKLQDILVSASHSPDHPVVKSEFESSPELVEKEPMLAIDCREPYAFDTALLEQPCEAEEYRITSAAATSELEEILDFMLCGSDIEPPIGSLESPGAEGCRTPTYHLTETGKNWIEGEEWCLPDMELWPRELTELEKEPAGENRGPTELLSPLVMPSEVSEVLSVGGRWTPDLEITSSQPLDGQEDKLLHVSSLDTPQRSYGDLSPPCSNWVETGLEVSLTTDELLYPSPKAGKEVSGHSELLGSLPASSEEEEIDVVDWTAEGRLVPTTVPSVWPDPSSESETEVDILT.

In terms of domain architecture, BTB spans 34 to 102 (CDVLLQAEGE…LYTSEMEVSQ (69 aa)). Disordered regions lie at residues 157 to 176 (VTPS…PCPL), 212 to 355 (RACP…EGQV), and 374 to 410 (ETPL…QEMS). Positions 218–228 (QEKNSSPSSHS) are enriched in polar residues. A compositionally biased stretch (basic and acidic residues) spans 229–238 (QEPRENKNDT). Over residues 277–288 (SKPSSILSGSSS) the composition is skewed to low complexity. Residues 303 to 313 (VNKETPEDKPK) show a composition bias toward basic and acidic residues. Residues 396-410 (PSGTQPFSSNEQEMS) are compositionally biased toward polar residues. S420, S671, and S672 each carry phosphoserine. 2 disordered regions span residues 653–676 (KAGK…EEEE) and 691–712 (TTVP…DILT). Over residues 702–712 (SESETEVDILT) the composition is skewed to acidic residues.

The protein resides in the nucleus. In terms of biological role, specifically required during spermatogenesis to promote expression of piRNA precursors. The piRNA metabolic process mediates the repression of transposable elements during meiosis by forming complexes composed of piRNAs and Piwi proteins and governs the methylation and subsequent repression of transposons, which is essential for the germline integrity. Acts by facilitating transcription elongation at piRNA loci during pachytene. This chain is BTB/POZ domain-containing protein 18, found in Homo sapiens (Human).